A 186-amino-acid chain; its full sequence is Probable peptidyl-tRNA hydrolase 2 (186 aa).

This sequence belongs to the PTH2 family.

It catalyses the reaction an N-acyl-L-alpha-aminoacyl-tRNA + H2O = an N-acyl-L-amino acid + a tRNA + H(+). In terms of biological role, the natural substrate for this enzyme may be peptidyl-tRNAs which drop off the ribosome during protein synthesis. This is Probable peptidyl-tRNA hydrolase 2 from Drosophila melanogaster (Fruit fly).